Reading from the N-terminus, the 230-residue chain is Potassium/proton antiporter CemA (230 aa).

The next 4 helical transmembrane spans lie at 7–27, 106–126, 145–165, and 181–201; these read LPSLLYLVFIVLLPWGVSSSF, IILHFSTNIICLAILSGSFFL, LNDSIKAFFILLVTDFFVGFH, and FGWAPNELIFTIFVCSFPVIL.

Belongs to the CemA family.

The protein localises to the plastid. It is found in the chloroplast inner membrane. The enzyme catalyses K(+)(in) + H(+)(out) = K(+)(out) + H(+)(in). Its function is as follows. Contributes to K(+)/H(+) antiport activity by supporting proton efflux to control proton extrusion and homeostasis in chloroplasts in a light-dependent manner to modulate photosynthesis. Prevents excessive induction of non-photochemical quenching (NPQ) under continuous-light conditions. Indirectly promotes efficient inorganic carbon uptake into chloroplasts. This Hordeum vulgare (Barley) protein is Potassium/proton antiporter CemA.